The sequence spans 429 residues: L-threonine dehydratase biosynthetic IlvA (429 aa).

K66 bears the N6-(pyridoxal phosphate)lysine mark. Pyridoxal 5'-phosphate-binding positions include N93, 196–200, and S322; that span reads GGGGC. Residues 346–420 form the ACT-like domain; the sequence is HYFLVDFPQE…TDIHVEALEP (75 aa).

The protein belongs to the serine/threonine dehydratase family. As to quaternary structure, homotetramer. Pyridoxal 5'-phosphate serves as cofactor.

The catalysed reaction is L-threonine = 2-oxobutanoate + NH4(+). Its pathway is amino-acid biosynthesis; L-isoleucine biosynthesis; 2-oxobutanoate from L-threonine: step 1/1. Functionally, catalyzes the anaerobic formation of alpha-ketobutyrate and ammonia from threonine in a two-step reaction. The first step involved a dehydration of threonine and a production of enamine intermediates (aminocrotonate), which tautomerizes to its imine form (iminobutyrate). Both intermediates are unstable and short-lived. The second step is the nonenzymatic hydrolysis of the enamine/imine intermediates to form 2-ketobutyrate and free ammonia. In the low water environment of the cell, the second step is accelerated by RidA. This chain is L-threonine dehydratase biosynthetic IlvA (ilvA), found in Mycobacterium bovis (strain ATCC BAA-935 / AF2122/97).